A 158-amino-acid chain; its full sequence is Transcriptional repressor NrdR (158 aa).

The segment at Cys3 to Cys34 is a zinc-finger region. An ATP-cone domain is found at Ile49 to Thr139.

The protein belongs to the NrdR family. It depends on Zn(2+) as a cofactor.

Functionally, negatively regulates transcription of bacterial ribonucleotide reductase nrd genes and operons by binding to NrdR-boxes. This is Transcriptional repressor NrdR from Thermoanaerobacter sp. (strain X514).